We begin with the raw amino-acid sequence, 493 residues long: 3-octaprenyl-4-hydroxybenzoate carboxy-lyase (493 aa).

Asn-172 serves as a coordination point for Mn(2+). Residues 175–177, 189–191, and 194–195 each bind prenylated FMN; these read IYR, RWL, and RG. Residue Glu-238 coordinates Mn(2+). The Proton donor role is filled by Asp-287.

The protein belongs to the UbiD family. As to quaternary structure, homohexamer. Requires prenylated FMN as cofactor. Mn(2+) serves as cofactor.

It localises to the cell membrane. It catalyses the reaction a 4-hydroxy-3-(all-trans-polyprenyl)benzoate + H(+) = a 2-(all-trans-polyprenyl)phenol + CO2. The protein operates within cofactor biosynthesis; ubiquinone biosynthesis. Catalyzes the decarboxylation of 3-octaprenyl-4-hydroxy benzoate to 2-octaprenylphenol, an intermediate step in ubiquinone biosynthesis. The polypeptide is 3-octaprenyl-4-hydroxybenzoate carboxy-lyase (Shewanella woodyi (strain ATCC 51908 / MS32)).